The chain runs to 124 residues: Holo-[acyl-carrier-protein] synthase (124 aa).

Mg(2+) is bound by residues Asp-7 and Glu-55.

It belongs to the P-Pant transferase superfamily. AcpS family. It depends on Mg(2+) as a cofactor.

The protein resides in the cytoplasm. It catalyses the reaction apo-[ACP] + CoA = holo-[ACP] + adenosine 3',5'-bisphosphate + H(+). Functionally, transfers the 4'-phosphopantetheine moiety from coenzyme A to a Ser of acyl-carrier-protein. This is Holo-[acyl-carrier-protein] synthase from Borreliella burgdorferi (strain ATCC 35210 / DSM 4680 / CIP 102532 / B31) (Borrelia burgdorferi).